The chain runs to 677 residues: MTQVAKKILVTCALPYANGSIHLGHMLEHIQADVWVRYQRMRGHEVNFICADDAHGTPIMLKAQQLGITPEQMIGEMSQEHQTDFAGFNISYDNYHSTHSEENRQLSELIYSRLKENGFIKNRTISQLYDPEKGMFLPDRFVKGTCPKCKSPDQYGDNCEVCGATYSPTELIEPKSVVSGATPVMRDSEHFFFDLPSFSEMLQAWTRSGALQEQVANKMQEWFESGLQQWDISRDAPYFGFEIPNAPGKYFYVWLDAPIGYMGSFKNLCDKRGDSVSFDEYWKKDSTAELYHFIGKDIVYFHSLFWPAMLEGSNFRKPTNLFVHGYVTVNGAKMSKSRGTFIKASTWLNHFDADSLRYYYTAKLSSRIDDIDLNLEDFVQRVNADIVNKVVNLASRNAGFINKRFDGVLASELADPQLYKTFTDAAEVIGEAWESREFGKAIREIMALADLANRYVDEQAPWVVAKQEGRDADLQAICSMGINLFRVLMTYLKPVLPKLTERAEAFLNTELTWDGIQQPLLGHKVNPFKALYNRIDMKQVEALVEASKEEVKAAAAPVTGPLADDPIQETITFDDFAKVDLRVALIENAEFVEGSDKLLRLTLDLGGEKRNVFSGIRSAYPDPQALIGRHTIMVANLAPRKMRFGISEGMVMAAGPGGKDIFLLSPDAGAKPGHQVK.

The 'HIGH' region motif lies at 15-25; the sequence is PYANGSIHLGH. Residues C146, C149, C159, and C162 each coordinate Zn(2+). The 'KMSKS' region motif lies at 333-337; it reads KMSKS. K336 provides a ligand contact to ATP. Residues 575-677 form the tRNA-binding domain; sequence DFAKVDLRVA…AGAKPGHQVK (103 aa).

It belongs to the class-I aminoacyl-tRNA synthetase family. MetG type 1 subfamily. Homodimer. The cofactor is Zn(2+).

The protein resides in the cytoplasm. It carries out the reaction tRNA(Met) + L-methionine + ATP = L-methionyl-tRNA(Met) + AMP + diphosphate. In terms of biological role, is required not only for elongation of protein synthesis but also for the initiation of all mRNA translation through initiator tRNA(fMet) aminoacylation. The chain is Methionine--tRNA ligase from Escherichia coli O81 (strain ED1a).